The sequence spans 491 residues: Glutamyl-tRNA(Gln) amidotransferase subunit A (491 aa).

Residues Lys80 and Ser155 each act as charge relay system in the active site. The active-site Acyl-ester intermediate is the Ser179.

The protein belongs to the amidase family. GatA subfamily. In terms of assembly, heterotrimer of A, B and C subunits.

The catalysed reaction is L-glutamyl-tRNA(Gln) + L-glutamine + ATP + H2O = L-glutaminyl-tRNA(Gln) + L-glutamate + ADP + phosphate + H(+). Its function is as follows. Allows the formation of correctly charged Gln-tRNA(Gln) through the transamidation of misacylated Glu-tRNA(Gln) in organisms which lack glutaminyl-tRNA synthetase. The reaction takes place in the presence of glutamine and ATP through an activated gamma-phospho-Glu-tRNA(Gln). The chain is Glutamyl-tRNA(Gln) amidotransferase subunit A from Salinispora tropica (strain ATCC BAA-916 / DSM 44818 / JCM 13857 / NBRC 105044 / CNB-440).